Reading from the N-terminus, the 114-residue chain is Large ribosomal subunit protein uL22 (114 aa).

This sequence belongs to the universal ribosomal protein uL22 family. As to quaternary structure, part of the 50S ribosomal subunit.

Its function is as follows. This protein binds specifically to 23S rRNA; its binding is stimulated by other ribosomal proteins, e.g. L4, L17, and L20. It is important during the early stages of 50S assembly. It makes multiple contacts with different domains of the 23S rRNA in the assembled 50S subunit and ribosome. The globular domain of the protein is located near the polypeptide exit tunnel on the outside of the subunit, while an extended beta-hairpin is found that lines the wall of the exit tunnel in the center of the 70S ribosome. The chain is Large ribosomal subunit protein uL22 from Streptococcus sanguinis (strain SK36).